The primary structure comprises 578 residues: CTP synthase 2 (578 aa).

One can recognise a Glutamine amidotransferase type-1 domain in the interval 300 to 553; sequence SIALVGKYTK…MLAASGKLNT (254 aa). Active-site for GATase activity residues include Cys399, His526, and Glu528.

It belongs to the CTP synthase family.

It carries out the reaction UTP + L-glutamine + ATP + H2O = CTP + L-glutamate + ADP + phosphate + 2 H(+). It participates in pyrimidine metabolism; CTP biosynthesis via de novo pathway; CTP from UDP: step 2/2. Catalyzes the ATP-dependent amination of UTP to CTP with either L-glutamine or ammonia as the source of nitrogen. Constitutes the rate-limiting enzyme in the synthesis of cytosine nucleotides. In Xenopus laevis (African clawed frog), this protein is CTP synthase 2 (ctps2).